Here is a 104-residue protein sequence, read N- to C-terminus: Large ribosomal subunit protein uL24 (104 aa).

Belongs to the universal ribosomal protein uL24 family. In terms of assembly, part of the 50S ribosomal subunit.

In terms of biological role, one of two assembly initiator proteins, it binds directly to the 5'-end of the 23S rRNA, where it nucleates assembly of the 50S subunit. One of the proteins that surrounds the polypeptide exit tunnel on the outside of the subunit. This chain is Large ribosomal subunit protein uL24, found in Alteromonas mediterranea (strain DSM 17117 / CIP 110805 / LMG 28347 / Deep ecotype).